The following is a 353-amino-acid chain: Photosystem II protein D1 (353 aa).

The residue at position 2 (Thr2) is an N-acetylthreonine. Thr2 is subject to Phosphothreonine. The next 3 membrane-spanning stretches (helical) occupy residues 29-46 (NIGW…TATS), 118-133 (HFLL…EWEL), and 142-156 (WIAV…AATA). Residue His118 participates in chlorophyll a binding. Tyr126 serves as a coordination point for pheophytin a. [CaMn4O5] cluster contacts are provided by Asp170 and Glu189. A helical membrane pass occupies residues 197–218 (FHMLGVAGVFGGSLFSAMHGSL). His198 contributes to the chlorophyll a binding site. A quinone-binding positions include His215 and 264-265 (SF). His215 contacts Fe cation. His272 contacts Fe cation. The chain crosses the membrane as a helical span at residues 274 to 288 (FLAAWPVVGIWFTAL). The [CaMn4O5] cluster site is built by His332, Glu333, Asp342, and Ala344. A propeptide spanning residues 345–353 (AVEAPAVNG) is cleaved from the precursor.

It belongs to the reaction center PufL/M/PsbA/D family. In terms of assembly, PSII is composed of 1 copy each of membrane proteins PsbA, PsbB, PsbC, PsbD, PsbE, PsbF, PsbH, PsbI, PsbJ, PsbK, PsbL, PsbM, PsbT, PsbX, PsbY, PsbZ, Psb30/Ycf12, at least 3 peripheral proteins of the oxygen-evolving complex and a large number of cofactors. It forms dimeric complexes. The D1/D2 heterodimer binds P680, chlorophylls that are the primary electron donor of PSII, and subsequent electron acceptors. It shares a non-heme iron and each subunit binds pheophytin, quinone, additional chlorophylls, carotenoids and lipids. D1 provides most of the ligands for the Mn4-Ca-O5 cluster of the oxygen-evolving complex (OEC). There is also a Cl(-1) ion associated with D1 and D2, which is required for oxygen evolution. The PSII complex binds additional chlorophylls, carotenoids and specific lipids. is required as a cofactor. Post-translationally, tyr-161 forms a radical intermediate that is referred to as redox-active TyrZ, YZ or Y-Z. C-terminally processed by CTPA; processing is essential to allow assembly of the oxygen-evolving complex and thus photosynthetic growth.

Its subcellular location is the plastid. The protein localises to the chloroplast thylakoid membrane. The catalysed reaction is 2 a plastoquinone + 4 hnu + 2 H2O = 2 a plastoquinol + O2. Its function is as follows. Photosystem II (PSII) is a light-driven water:plastoquinone oxidoreductase that uses light energy to abstract electrons from H(2)O, generating O(2) and a proton gradient subsequently used for ATP formation. It consists of a core antenna complex that captures photons, and an electron transfer chain that converts photonic excitation into a charge separation. The D1/D2 (PsbA/PsbD) reaction center heterodimer binds P680, the primary electron donor of PSII as well as several subsequent electron acceptors. The sequence is that of Photosystem II protein D1 from Dumortiera hirsuta (Liverwort).